Reading from the N-terminus, the 112-residue chain is Putative pterin-4-alpha-carbinolamine dehydratase (112 aa).

This sequence belongs to the pterin-4-alpha-carbinolamine dehydratase family.

The catalysed reaction is (4aS,6R)-4a-hydroxy-L-erythro-5,6,7,8-tetrahydrobiopterin = (6R)-L-erythro-6,7-dihydrobiopterin + H2O. This is Putative pterin-4-alpha-carbinolamine dehydratase from Shewanella halifaxensis (strain HAW-EB4).